Here is a 196-residue protein sequence, read N- to C-terminus: Large ribosomal subunit protein uL10 (196 aa).

Residues 167–196 (EKKAAEGPAEAPQPATEPPAEAPEAPADAE) form a disordered region.

This sequence belongs to the universal ribosomal protein uL10 family. As to quaternary structure, part of the ribosomal stalk of the 50S ribosomal subunit. The N-terminus interacts with L11 and the large rRNA to form the base of the stalk. The C-terminus forms an elongated spine to which L12 dimers bind in a sequential fashion forming a multimeric L10(L12)X complex.

Functionally, forms part of the ribosomal stalk, playing a central role in the interaction of the ribosome with GTP-bound translation factors. The protein is Large ribosomal subunit protein uL10 of Mycolicibacterium paratuberculosis (strain ATCC BAA-968 / K-10) (Mycobacterium paratuberculosis).